The following is a 451-amino-acid chain: Phosphoglucosamine mutase (451 aa).

Residue Ser102 is the Phosphoserine intermediate of the active site. Ser102, Asp242, Asp244, and Asp246 together coordinate Mg(2+). Phosphoserine is present on Ser102.

The protein belongs to the phosphohexose mutase family. The cofactor is Mg(2+). Activated by phosphorylation.

The catalysed reaction is alpha-D-glucosamine 1-phosphate = D-glucosamine 6-phosphate. Its function is as follows. Catalyzes the conversion of glucosamine-6-phosphate to glucosamine-1-phosphate. In Staphylococcus saprophyticus subsp. saprophyticus (strain ATCC 15305 / DSM 20229 / NCIMB 8711 / NCTC 7292 / S-41), this protein is Phosphoglucosamine mutase.